The primary structure comprises 225 residues: GTP-binding nuclear protein Ran (225 aa).

Residues 8-172 enclose the Small GTPase Ran-type domain; the sequence is VVAEFKLVLV…LWILRKLTGD (165 aa). A GTP-binding site is contributed by 19–26; it reads DGGVGKTT. A switch-I region spans residues 38–46; the sequence is KRYIATQGV. GTP contacts are provided by residues glycine 69, 123-126, and 151-153; these read NKVD and SAK. The switch-II stretch occupies residues 69–85; that stretch reads GQEKLGGLREGYYIGAN.

This sequence belongs to the small GTPase superfamily. Ran family. Monomer. Found in a nuclear export complex with RanGTP, exportin and pre-miRNA.

It localises to the nucleus. In terms of biological role, GTP-binding protein involved in nucleocytoplasmic transport. Required for the import of protein into the nucleus and also for RNA export. Involved in chromatin condensation and control of cell cycle. The polypeptide is GTP-binding nuclear protein Ran (Tetrahymena thermophila).